A 423-amino-acid polypeptide reads, in one-letter code: Polyglutamylase complex subunit TTLL1 (423 aa).

The TTL domain maps to 1–367; sequence MAGRVKWVTD…NGEIPDCKWN (367 aa). Residues Lys138, 144-145, 181-184, and 194-196 contribute to the ATP site; these read QG, SLYI, and KFD. Gln144 contributes to the a protein binding site. L-glutamate is bound at residue Arg220. 241 to 242 is an ATP binding site; that stretch reads TN. Lys259 serves as a coordination point for L-glutamate. Residues Asp313, Glu326, and Asn328 each coordinate Mg(2+). Residue Lys344 participates in L-glutamate binding. The segment at 390–423 is disordered; that stretch reads DGAERELRSRPGQPVGPRTGRSRDSGRNVLTTWK.

Belongs to the tubulin polyglutamylase family. As to quaternary structure, part of the neuronal tubulin polyglutamylase complex which contains TPGS1, TPGS2, TTLL1, LRRC49 and NICN1. Interacts with PCM1, CSTPP1 and LRRC49. Requires Mg(2+) as cofactor.

Its subcellular location is the cytoplasm. The protein resides in the cytoskeleton. It localises to the cilium basal body. The protein localises to the cilium axoneme. It is found in the cell projection. Its subcellular location is the cilium. The protein resides in the flagellum. The catalysed reaction is (L-glutamyl)(n)-gamma-L-glutamyl-L-glutamyl-[protein] + L-glutamate + ATP = (L-glutamyl)(n+1)-gamma-L-glutamyl-L-glutamyl-[protein] + ADP + phosphate + H(+). In terms of biological role, catalytic subunit of a polyglutamylase complex which modifies tubulin, generating side chains of glutamate on the gamma-carboxyl group of specific glutamate residues within the C-terminal tail of tubulin. Probably involved in the side-chain elongation step of the polyglutamylation reaction rather than the initiation step. Modifies both alpha- and beta-tubulins with a preference for the alpha-tail. Unlike most polyglutamylases of the tubulin--tyrosine ligase family, only displays a catalytic activity when in complex with other proteins as it is most likely lacking domains important for autonomous activity. Part of the neuronal tubulin polyglutamylase complex. Mediates cilia and flagella polyglutamylation which is essential for their biogenesis and motility. Involved in respiratory motile cilia function through the regulation of beating asymmetry. Essential for sperm flagella biogenesis, motility and male fertility. Involved in KLF4 glutamylation which impedes its ubiquitination, thereby leading to somatic cell reprogramming, pluripotency maintenance and embryogenesis. This chain is Polyglutamylase complex subunit TTLL1 (Ttll1), found in Rattus norvegicus (Rat).